Consider the following 447-residue polypeptide: NAD-dependent histone deacetylase HST3 (447 aa).

The segment at 1-21 is disordered; the sequence is MTSVSPSPPASRSGSMCSDLP. The region spanning 35 to 363 is the Deacetylase sirtuin-type domain; that stretch reads LDADDEVLRR…IKKLRQLKRE (329 aa). NAD(+)-binding positions include 60–79 and 151–154; these read GAGI…DGLY and QNID. H187 serves as the catalytic Proton acceptor. Residues C195, C198, C220, and C223 each contribute to the Zn(2+) site. Residues 282–284, 312–314, and C333 each bind NAD(+); these read GTS and NKT. Residues 365–375 show a composition bias toward basic and acidic residues; sequence SDLRKQMKAQK. Disordered regions lie at residues 365 to 393 and 411 to 447; these read SDLR…QGID and KRKI…NQAS.

Belongs to the sirtuin family. Class I subfamily. Zn(2+) is required as a cofactor.

It is found in the cytoplasm. The protein resides in the nucleus. The enzyme catalyses N(6)-acetyl-L-lysyl-[protein] + NAD(+) + H2O = 2''-O-acetyl-ADP-D-ribose + nicotinamide + L-lysyl-[protein]. NAD-dependent histone deacetylase, which contributes together with HST4 to histone H3 'Lys-56' deacetylation, regulation of telomeric silencing, proper cell cycle progression, DNA damage control, DNA recombination, and genomic maintenance. This is NAD-dependent histone deacetylase HST3 (HST3) from Saccharomyces cerevisiae (strain ATCC 204508 / S288c) (Baker's yeast).